We begin with the raw amino-acid sequence, 228 residues long: Putative adhesin RBE_1271 (228 aa).

Positions 1-22 (MKKLLLIAATSATVLSSALSFA) are cleaved as a signal peptide.

The protein is Putative adhesin RBE_1271 of Rickettsia bellii (strain RML369-C).